Reading from the N-terminus, the 296-residue chain is Cadherin-4 (296 aa).

3 Cadherin domains span residues 1-101, 102-216, and 217-296; these read NVPE…RPEF, INQV…PPEF, and TTST…MLTI. The Extracellular segment spans residues 1-296; that stretch reads NVPENSRGPF…ELNRAFMLTI (296 aa). Asparagine 107 and asparagine 236 each carry an N-linked (GlcNAc...) asparagine glycan.

It is found in the cell membrane. In terms of biological role, cadherins are calcium-dependent cell adhesion proteins. They preferentially interact with themselves in a homophilic manner in connecting cells; cadherins may thus contribute to the sorting of heterogeneous cell types. May play an important role in retinal development. The protein is Cadherin-4 (Cdh4) of Rattus norvegicus (Rat).